Consider the following 292-residue polypeptide: Nucleophosmin (292 aa).

Methionine 1 carries the post-translational modification N-acetylmethionine. Residues 1-117 (MEDSMDMDMS…PVHISGQHLV (117 aa)) are necessary for interaction with APEX1. A required for interaction with SENP3 region spans residues 1-185 (MEDSMDMDMS…DDDDFDEEET (185 aa)). Phosphoserine; by PLK1 and PLK2 is present on serine 4. The residue at position 10 (serine 10) is a Phosphoserine. A Glycyl lysine isopeptide (Lys-Gly) (interchain with G-Cter in SUMO2) cross-link involves residue lysine 27. Lysine 32 bears the N6-acetyllysine; alternate mark. Lysine 32 is covalently cross-linked (Glycyl lysine isopeptide (Lys-Gly) (interchain with G-Cter in SUMO1); alternate). Lysine 32 participates in a covalent cross-link: Glycyl lysine isopeptide (Lys-Gly) (interchain with G-Cter in SUMO2); alternate. The residue at position 43 (serine 43) is a Phosphoserine. Phosphotyrosine is present on tyrosine 67. At serine 70 the chain carries Phosphoserine. Threonine 75 and threonine 95 each carry phosphothreonine. A phosphoserine mark is found at serine 125 and serine 139. A disordered region spans residues 138–248 (MSGKRSAPGG…PSSVEDIKAK (111 aa)). Lysine 141 is covalently cross-linked (Glycyl lysine isopeptide (Lys-Gly) (interchain with G-Cter in SUMO2)). Position 150 is an N6-acetyllysine; alternate (lysine 150). Lysine 150 participates in a covalent cross-link: Glycyl lysine isopeptide (Lys-Gly) (interchain with G-Cter in SUMO2); alternate. Residues 152–157 (PQKKVK) carry the Nuclear localization signal motif. The residue at position 154 (lysine 154) is an N6-acetyllysine. Residues 159 to 186 (DEDDEDDDEDDEDDEDDDDDDFDEEETE) show a composition bias toward acidic residues. An interaction with NOP2 region spans residues 186 to 214 (EEKVPVKKSVRDTPAKNAQKSNQNGKDLK). Residues 187 to 199 (EKVPVKKSVRDTP) show a composition bias toward basic and acidic residues. Residues 190–196 (PVKKSVR) carry the Nuclear localization signal motif. Threonine 198 is modified (phosphothreonine; by CDK1 and CDK2). Positions 201 to 210 (KNAQKSNQNG) are enriched in polar residues. The residue at position 206 (serine 206) is an ADP-ribosylserine. An N6-acetyllysine modification is found at lysine 211. Lysine 214 participates in a covalent cross-link: Glycyl lysine isopeptide (Lys-Gly) (interchain with G-Cter in SUMO2). Residue threonine 217 is modified to Phosphothreonine; by CDK1. A compositionally biased stretch (basic and acidic residues) spans 221–233 (KGQESFKKQEKTP). Residue serine 225 is modified to Phosphoserine. Residue lysine 227 is modified to N6-acetyllysine. Lysine 228 is modified (N6-acetyllysine; alternate). Residue lysine 228 forms a Glycyl lysine isopeptide (Lys-Gly) (interchain with G-Cter in SUMO); alternate linkage. A phosphothreonine; by CDK1 mark is found at threonine 232 and threonine 235. Residues serine 240 and serine 241 each carry the phosphoserine modification. Residues 241-292 (SVEDIKAKMQASIEKGGSLPKVEAKFINYVKNCFRMTDQEAIQDLWQWRKSL) are required for nucleolar localization. Lysine 246 is covalently cross-linked (Glycyl lysine isopeptide (Lys-Gly) (interchain with G-Cter in SUMO1); alternate). Residues lysine 246 and lysine 248 each participate in a glycyl lysine isopeptide (Lys-Gly) (interchain with G-Cter in SUMO2); alternate cross-link. Position 248 is an N6-acetyllysine; alternate (lysine 248). Serine 252 carries the post-translational modification Phosphoserine. Lysine 255 is subject to N6-acetyllysine; alternate. A Glycyl lysine isopeptide (Lys-Gly) (interchain with G-Cter in SUMO1); alternate cross-link involves residue lysine 255. Residue lysine 255 forms a Glycyl lysine isopeptide (Lys-Gly) (interchain with G-Cter in SUMO2); alternate linkage. At serine 258 the chain carries Phosphoserine. Residues lysine 261, lysine 265, and lysine 271 each participate in a glycyl lysine isopeptide (Lys-Gly) (interchain with G-Cter in SUMO2); alternate cross-link. Lysine 261 participates in a covalent cross-link: Glycyl lysine isopeptide (Lys-Gly) (interchain with G-Cter in SUMO); alternate. N6-acetyllysine; alternate occurs at positions 265 and 271. Lysine 265 participates in a covalent cross-link: Glycyl lysine isopeptide (Lys-Gly) (interchain with G-Cter in SUMO1); alternate. Lysine 265 bears the N6-succinyllysine; alternate mark. Residue threonine 277 is modified to Phosphothreonine. N6-acetyllysine is present on lysine 290.

It belongs to the nucleoplasmin family. As to quaternary structure, decamer formed by two pentameric rings associated in a head-to-head fashion. Disulfide-linked dimers under certain conditions. Interacts with NSUN2 and SENP3. The SWAP complex consists of NPM1, NCL, PARP1 and SWAP70. Interacts with the methylated form of RPS10. Interacts (via N-terminal domain) with APEX1; the interaction is RNA-dependent and decreases peroxide-damaged cells. Interacts with NEK2. Interacts with ROCK2 and BRCA2. Interacts with RPGR. Interacts with CENPW. Interacts with EIF2AK2/PKR. Interacts with DDX31; this interaction prevents interaction between NPM1 and HDM2. Interacts with MYC; competitive with NOP53. Interacts with NOP53; the interaction is direct and competitive with MYC. Interacts with LRRC34. Interacts with RRP1B. Interacts with NPM3. Interacts with ALKBH2. Interacts with TTF1 (via C-terminal region). Interacts with NOP2. Interacts with ARID3C (via REKLES DOMAIN); the interaction mediates ARID3C nuclear shuttling. In terms of processing, acetylated at C-terminal lysine residues, thereby increasing affinity to histones. ADP-ribosylated. Post-translationally, phosphorylated at Ser-4 by PLK1 and PLK2. Phosphorylation at Ser-4 by PLK2 in S phase is required for centriole duplication and is sufficient to trigger centriole replication. Phosphorylation at Ser-4 by PLK1 takes place during mitosis. Phosphorylated by CDK2 at Ser-125 and Thr-198. Phosphorylation at Thr-198 may trigger initiation of centrosome duplication. Phosphorylated by CDK1 at Thr-198, Thr-217, Thr-232 and Thr-235 during cell mitosis. When these four sites are phosphorated, RNA-binding activity seem to be abolished. May be phosphorylated at Ser-70 by NEK2. The Thr-198 phosphorylated form has higher affinity for ROCK2. In terms of processing, sumoylated by ARF. Ubiquitinated. Ubiquitination leads to proteasomal degradation. Deubiquitinated by USP36. Expressed in B-cells that have been induced to switch to various Ig isotypes.

It localises to the nucleus. The protein localises to the nucleolus. It is found in the nucleoplasm. The protein resides in the cytoplasm. Its subcellular location is the cytoskeleton. It localises to the microtubule organizing center. The protein localises to the centrosome. In terms of biological role, involved in diverse cellular processes such as ribosome biogenesis, centrosome duplication, protein chaperoning, histone assembly, cell proliferation, and regulation of tumor suppressors p53/TP53 and ARF. Binds ribosome presumably to drive ribosome nuclear export. Associated with nucleolar ribonucleoprotein structures and bind single-stranded nucleic acids. Acts as a chaperonin for the core histones H3, H2B and H4. Stimulates APEX1 endonuclease activity on apurinic/apyrimidinic (AP) double-stranded DNA but inhibits APEX1 endonuclease activity on AP single-stranded RNA. May exert a control of APEX1 endonuclease activity within nucleoli devoted to repair AP on rDNA and the removal of oxidized rRNA molecules. In concert with BRCA2, regulates centrosome duplication. Regulates centriole duplication: phosphorylation by PLK2 is able to trigger centriole replication. Negatively regulates the activation of EIF2AK2/PKR and suppresses apoptosis through inhibition of EIF2AK2/PKR autophosphorylation. Antagonizes the inhibitory effect of ATF5 on cell proliferation and relieves ATF5-induced G2/M blockade. In complex with MYC enhances the transcription of MYC target genes. May act as chaperonin or cotransporter in the nucleolar localization of transcription termination factor TTF1. The polypeptide is Nucleophosmin (Npm1) (Mus musculus (Mouse)).